The following is a 227-amino-acid chain: 2-C-methyl-D-erythritol 4-phosphate cytidylyltransferase (227 aa).

This sequence belongs to the IspD/TarI cytidylyltransferase family. IspD subfamily.

The enzyme catalyses 2-C-methyl-D-erythritol 4-phosphate + CTP + H(+) = 4-CDP-2-C-methyl-D-erythritol + diphosphate. Its pathway is isoprenoid biosynthesis; isopentenyl diphosphate biosynthesis via DXP pathway; isopentenyl diphosphate from 1-deoxy-D-xylulose 5-phosphate: step 2/6. Functionally, catalyzes the formation of 4-diphosphocytidyl-2-C-methyl-D-erythritol from CTP and 2-C-methyl-D-erythritol 4-phosphate (MEP). In Petrotoga mobilis (strain DSM 10674 / SJ95), this protein is 2-C-methyl-D-erythritol 4-phosphate cytidylyltransferase.